We begin with the raw amino-acid sequence, 732 residues long: Elongation factor 2 (732 aa).

In terms of domain architecture, tr-type G spans 19–260 (ERIRNIGIAA…MVVKHLPNPI (242 aa)). GTP is bound by residues 28-35 (AHIDHGKT), 94-98 (DTPGH), and 148-151 (NKVD). His597 carries the diphthamide modification.

Belongs to the TRAFAC class translation factor GTPase superfamily. Classic translation factor GTPase family. EF-G/EF-2 subfamily.

Its subcellular location is the cytoplasm. In terms of biological role, catalyzes the GTP-dependent ribosomal translocation step during translation elongation. During this step, the ribosome changes from the pre-translocational (PRE) to the post-translocational (POST) state as the newly formed A-site-bound peptidyl-tRNA and P-site-bound deacylated tRNA move to the P and E sites, respectively. Catalyzes the coordinated movement of the two tRNA molecules, the mRNA and conformational changes in the ribosome. The chain is Elongation factor 2 (fusA) from Pyrococcus abyssi (strain GE5 / Orsay).